The following is a 282-amino-acid chain: Diaminopimelate epimerase (282 aa).

Residues Asn13, Gln45, and Asn64 each coordinate substrate. Cys73 acts as the Proton donor in catalysis. Residues 74–75 (GN), Asn155, Asn189, and 207–208 (ER) each bind substrate. Cys216 acts as the Proton acceptor in catalysis. 217 to 218 (GS) is a substrate binding site.

The protein belongs to the diaminopimelate epimerase family. Homodimer.

Its subcellular location is the cytoplasm. The catalysed reaction is (2S,6S)-2,6-diaminopimelate = meso-2,6-diaminopimelate. It participates in amino-acid biosynthesis; L-lysine biosynthesis via DAP pathway; DL-2,6-diaminopimelate from LL-2,6-diaminopimelate: step 1/1. In terms of biological role, catalyzes the stereoinversion of LL-2,6-diaminopimelate (L,L-DAP) to meso-diaminopimelate (meso-DAP), a precursor of L-lysine and an essential component of the bacterial peptidoglycan. The polypeptide is Diaminopimelate epimerase (Bartonella bacilliformis (strain ATCC 35685 / KC583 / Herrer 020/F12,63)).